Here is a 75-residue protein sequence, read N- to C-terminus: uncharacterized protein (75 aa).

A helical membrane pass occupies residues 44–64 (IINMIVIWAALIALFVKLYIL).

It is found in the host membrane. This is an uncharacterized protein from Ostreid herpesvirus 1 (isolate France) (OsHV-1).